The sequence spans 260 residues: Proteasome subunit alpha (260 aa).

It belongs to the peptidase T1A family. The 20S proteasome core is composed of 14 alpha and 14 beta subunits that assemble into four stacked heptameric rings, resulting in a barrel-shaped structure. The two inner rings, each composed of seven catalytic beta subunits, are sandwiched by two outer rings, each composed of seven alpha subunits. The catalytic chamber with the active sites is on the inside of the barrel. Has a gated structure, the ends of the cylinder being occluded by the N-termini of the alpha-subunits. Is capped at one or both ends by the proteasome regulatory ATPase, PAN.

The protein resides in the cytoplasm. The formation of the proteasomal ATPase PAN-20S proteasome complex, via the docking of the C-termini of PAN into the intersubunit pockets in the alpha-rings, triggers opening of the gate for substrate entry. Interconversion between the open-gate and close-gate conformations leads to a dynamic regulation of the 20S proteasome proteolysis activity. In terms of biological role, component of the proteasome core, a large protease complex with broad specificity involved in protein degradation. The protein is Proteasome subunit alpha of Thermococcus onnurineus (strain NA1).